Here is a 401-residue protein sequence, read N- to C-terminus: Deubiquitinase and deneddylase Dub1 (401 aa).

Residues Met-1–Thr-11 show a composition bias toward polar residues. Residues Met-1–Leu-24 are disordered. The chain crosses the membrane as a helical span at residues Thr-40–Phe-60. The disordered stretch occupies residues Lys-77–Pro-130. The span at Val-86–Pro-128 shows a compositional bias: pro residues. Active-site residues include His-275, Asp-292, and Cys-345.

It belongs to the peptidase C48 family. As to quaternary structure, binds to host NFKBIA.

It localises to the secreted. It is found in the host cell. Its subcellular location is the membrane. In terms of biological role, effector proteins function to alter host cell physiology and promote bacterial survival in host tissues. This protease possesses deubiquitinating and deneddylating activities. Impairs ubiquitination and degradation of NF-kappa-B inhibitor alpha (NFKBIA), thereby preventing NF-kappa-B activation. This chain is Deubiquitinase and deneddylase Dub1 (cdu1), found in Chlamydia trachomatis serovar L2 (strain ATCC VR-902B / DSM 19102 / 434/Bu).